The following is a 316-amino-acid chain: tRNA uridine(34) hydroxylase (316 aa).

Positions 123–217 constitute a Rhodanese domain; it reads LDEDTVVIDA…YGKNPETRGE (95 aa). The active-site Cysteine persulfide intermediate is cysteine 177.

The protein belongs to the TrhO family.

The enzyme catalyses uridine(34) in tRNA + AH2 + O2 = 5-hydroxyuridine(34) in tRNA + A + H2O. Functionally, catalyzes oxygen-dependent 5-hydroxyuridine (ho5U) modification at position 34 in tRNAs. The protein is tRNA uridine(34) hydroxylase of Enterococcus faecalis (strain ATCC 700802 / V583).